The sequence spans 109 residues: T cell receptor alpha variable 27 (109 aa).

Residues 1-19 form the signal peptide; the sequence is MVLKFSVSILWIQLAWVST. An Ig-like domain is found at 20-109; sequence QLLEQSPQFL…GDTGLYLCAG (90 aa). Residues Asn36 and Asn42 are each glycosylated (N-linked (GlcNAc...) asparagine). A disulfide bond links Cys41 and Cys107.

In terms of assembly, alpha-beta TR is a heterodimer composed of an alpha and beta chain; disulfide-linked. The alpha-beta TR is associated with the transmembrane signaling CD3 coreceptor proteins to form the TR-CD3 (TcR or TCR). The assembly of alpha-beta TR heterodimers with CD3 occurs in the endoplasmic reticulum where a single alpha-beta TR heterodimer associates with one CD3D-CD3E heterodimer, one CD3G-CD3E heterodimer and one CD247 homodimer forming a stable octameric structure. CD3D-CD3E and CD3G-CD3E heterodimers preferentially associate with TR alpha and TR beta chains, respectively. The association of the CD247 homodimer is the last step of TcR assembly in the endoplasmic reticulum and is required for transport to the cell surface. As to quaternary structure, (Microbial infection) Interacts with Staphylococcus aureus enterotoxin H/entH.

The protein resides in the cell membrane. Its function is as follows. V region of the variable domain of T cell receptor (TR) alpha chain that participates in the antigen recognition. Alpha-beta T cell receptors are antigen specific receptors which are essential to the immune response and are present on the cell surface of T lymphocytes. Recognize peptide-major histocompatibility (MH) (pMH) complexes that are displayed by antigen presenting cells (APC), a prerequisite for efficient T cell adaptive immunity against pathogens. Binding of alpha-beta TR to pMH complex initiates TR-CD3 clustering on the cell surface and intracellular activation of LCK that phosphorylates the ITAM motifs of CD3G, CD3D, CD3E and CD247 enabling the recruitment of ZAP70. In turn, ZAP70 phosphorylates LAT, which recruits numerous signaling molecules to form the LAT signalosome. The LAT signalosome propagates signal branching to three major signaling pathways, the calcium, the mitogen-activated protein kinase (MAPK) kinase and the nuclear factor NF-kappa-B (NF-kB) pathways, leading to the mobilization of transcription factors that are critical for gene expression and essential for T cell growth and differentiation. The T cell repertoire is generated in the thymus, by V-(D)-J rearrangement. This repertoire is then shaped by intrathymic selection events to generate a peripheral T cell pool of self-MH restricted, non-autoaggressive T cells. Post-thymic interaction of alpha-beta TR with the pMH complexes shapes TR structural and functional avidity. This is T cell receptor alpha variable 27 from Homo sapiens (Human).